The following is a 152-amino-acid chain: Lipoprotein signal peptidase (152 aa).

A run of 3 helical transmembrane segments spans residues 5-25 (LFVL…FWIV), 61-81 (WFFV…LATH), and 84-104 (LNIW…GNFI). Active-site residues include aspartate 114 and aspartate 130. Residues 125–145 (IFNVADSYLTVGVILLVICLW) traverse the membrane as a helical segment.

The protein belongs to the peptidase A8 family.

It localises to the cell membrane. It carries out the reaction Release of signal peptides from bacterial membrane prolipoproteins. Hydrolyzes -Xaa-Yaa-Zaa-|-(S,diacylglyceryl)Cys-, in which Xaa is hydrophobic (preferably Leu), and Yaa (Ala or Ser) and Zaa (Gly or Ala) have small, neutral side chains.. The protein operates within protein modification; lipoprotein biosynthesis (signal peptide cleavage). This protein specifically catalyzes the removal of signal peptides from prolipoproteins. This is Lipoprotein signal peptidase from Streptococcus pyogenes serotype M6 (strain ATCC BAA-946 / MGAS10394).